The chain runs to 71 residues: BBSome-interacting protein 1 (71 aa).

This sequence belongs to the BBIP10 family.

Its subcellular location is the cell projection. It is found in the cilium. It localises to the cytoplasm. In terms of biological role, required for primary cilia assembly. This chain is BBSome-interacting protein 1 (bbip1), found in Nematostella vectensis (Starlet sea anemone).